We begin with the raw amino-acid sequence, 244 residues long: Extracellular superoxide dismutase [Cu-Zn] (244 aa).

The N-terminal stretch at 1 to 15 (MVAFLFCNLLLVACG) is a signal peptide. 2 cysteine pairs are disulfide-bonded: Cys-70–Cys-215 and Cys-132–Cys-214. Residue Asn-114 is glycosylated (N-linked (GlcNAc...) asparagine). Cu cation-binding residues include His-121, His-123, and His-138. Zn(2+) is bound by residues His-138, His-146, His-149, and Asp-152. Position 188 (His-188) interacts with Cu cation. The segment at 224 to 244 (AWESQTKERKKRRRESECKTT) is disordered.

This sequence belongs to the Cu-Zn superoxide dismutase family. Homodimer. Interacts with ATP7A; this interaction is copper-dependent and is required for SOD3 activity. Requires Cu cation as cofactor. Zn(2+) serves as cofactor.

The protein localises to the secreted. It is found in the extracellular space. The protein resides in the golgi apparatus. It localises to the trans-Golgi network. The catalysed reaction is 2 superoxide + 2 H(+) = H2O2 + O2. Its function is as follows. Protect the extracellular space from toxic effect of reactive oxygen intermediates by converting superoxide radicals into hydrogen peroxide and oxygen. This is Extracellular superoxide dismutase [Cu-Zn] (Sod3) from Rattus norvegicus (Rat).